Reading from the N-terminus, the 70-residue chain is uncharacterized protein (70 aa).

A helical membrane pass occupies residues 14–34; it reads CLVVWFACVYSLLILVVLLLI.

The protein localises to the virion membrane. This is an uncharacterized protein from Homo sapiens (Human).